A 388-amino-acid chain; its full sequence is Methylthioribose-1-phosphate isomerase (388 aa).

The Proton donor role is filled by D258.

Belongs to the eIF-2B alpha/beta/delta subunits family. MtnA subfamily.

It localises to the cytoplasm. The protein resides in the nucleus. It catalyses the reaction 5-(methylsulfanyl)-alpha-D-ribose 1-phosphate = 5-(methylsulfanyl)-D-ribulose 1-phosphate. The protein operates within amino-acid biosynthesis; L-methionine biosynthesis via salvage pathway; L-methionine from S-methyl-5-thio-alpha-D-ribose 1-phosphate: step 1/6. Catalyzes the interconversion of methylthioribose-1-phosphate (MTR-1-P) into methylthioribulose-1-phosphate (MTRu-1-P). The polypeptide is Methylthioribose-1-phosphate isomerase (mri-1) (Neurospora crassa (strain ATCC 24698 / 74-OR23-1A / CBS 708.71 / DSM 1257 / FGSC 987)).